A 628-amino-acid chain; its full sequence is Pinene synthase, chloroplastic (628 aa).

The N-terminal 36 residues, 1 to 36, are a transit peptide targeting the chloroplast; that stretch reads MALVSTAPLASKSCLHKSLISSTHELKALSRTIPAL. Mg(2+) is bound by residues D379, D383, and D531. The short motif at 379 to 383 is the DDXXD motif element; that stretch reads DDMYD.

The protein belongs to the terpene synthase family. Tpsd subfamily. Mg(2+) is required as a cofactor. The cofactor is Mn(2+). K(+) serves as cofactor.

The protein localises to the plastid. The protein resides in the chloroplast. It catalyses the reaction (2E)-geranyl diphosphate = (1S,5S)-alpha-pinene + diphosphate. The catalysed reaction is (2E)-geranyl diphosphate = (1S,5S)-beta-pinene + diphosphate. Its pathway is terpene metabolism; oleoresin biosynthesis. Its function is as follows. Involved in defensive oleoresin formation in conifers in response to insect attack or other injury. Involved in monoterpene (C10) olefins biosynthesis. A mixture of alpha- and beta-pinene is produced by this enzyme. In Abies grandis (Grand fir), this protein is Pinene synthase, chloroplastic (ag3).